The sequence spans 370 residues: N-acyl-L-amino acid amidohydrolase (370 aa).

The protein belongs to the peptidase M20 family. As to quaternary structure, homotetramer. The cofactor is Co(2+).

It carries out the reaction an N-acyl-L-amino acid + H2O = an L-alpha-amino acid + a carboxylate. The catalysed reaction is an N-acetyl-L-cysteine-S-conjugate + H2O = an S-substituted L-cysteine + acetate. Functionally, hydrolyzes most efficiently N-acetyl derivatives of aromatic amino acids but is also active on other amino acids. L-stereospecific. The chain is N-acyl-L-amino acid amidohydrolase (amaA) from Geobacillus stearothermophilus (Bacillus stearothermophilus).